Consider the following 465-residue polypeptide: UDP-N-acetylmuramoylalanine--D-glutamate ligase (465 aa).

127–133 serves as a coordination point for ATP; sequence GSNGKST.

Belongs to the MurCDEF family.

The protein resides in the cytoplasm. It catalyses the reaction UDP-N-acetyl-alpha-D-muramoyl-L-alanine + D-glutamate + ATP = UDP-N-acetyl-alpha-D-muramoyl-L-alanyl-D-glutamate + ADP + phosphate + H(+). Its pathway is cell wall biogenesis; peptidoglycan biosynthesis. Cell wall formation. Catalyzes the addition of glutamate to the nucleotide precursor UDP-N-acetylmuramoyl-L-alanine (UMA). The polypeptide is UDP-N-acetylmuramoylalanine--D-glutamate ligase (Cereibacter sphaeroides (strain ATCC 17029 / ATH 2.4.9) (Rhodobacter sphaeroides)).